Here is a 299-residue protein sequence, read N- to C-terminus: MIKHFINLDDLPNHDLTQIIKQAIALKKQYKSGKINKILEHKTLAMIFDKSSTRTRVSFEAGMTQLGGHALFLSDKDIQLGRGEPIIDSAIVISSMVDVIMMRISSHKDIHTFAENSSVPIINALSDESHPCQLLSDMMTYQEHNGSIANKTIAWIGDGNNMCHTYMQAAKSFNFKLNIATPKNYQPDQDFIEKYANHIHLFTDAQKACQKVDLVVTDVWASMGQEAEQTKRKITFKDFSVNAALMSKAKPSAVFMHCLPAHRGEEVSTNVIDGSQSLVWLEAENRLHVQKALLLYLLN.

Carbamoyl phosphate is bound by residues 52-55 (STRT), Gln79, Arg103, and 130-133 (HPCQ). L-ornithine is bound by residues Asn161, Asp218, and 222-223 (SM). Residues 258 to 259 (CL) and Arg286 contribute to the carbamoyl phosphate site.

The protein belongs to the aspartate/ornithine carbamoyltransferase superfamily. OTCase family.

It localises to the cytoplasm. The catalysed reaction is carbamoyl phosphate + L-ornithine = L-citrulline + phosphate + H(+). It functions in the pathway amino-acid biosynthesis; L-arginine biosynthesis; L-arginine from L-ornithine and carbamoyl phosphate: step 1/3. Functionally, reversibly catalyzes the transfer of the carbamoyl group from carbamoyl phosphate (CP) to the N(epsilon) atom of ornithine (ORN) to produce L-citrulline. This Ruthia magnifica subsp. Calyptogena magnifica protein is Ornithine carbamoyltransferase.